A 227-amino-acid polypeptide reads, in one-letter code: UPF0758 protein Pcar_0065 (227 aa).

The region spanning 105 to 227 (RYTSPQAVFA…YVSLADRGVL (123 aa)) is the MPN domain. The Zn(2+) site is built by histidine 176, histidine 178, and aspartate 189. The JAMM motif motif lies at 176–189 (HNHPSGDPSPSRED).

It belongs to the UPF0758 family.

The polypeptide is UPF0758 protein Pcar_0065 (Syntrophotalea carbinolica (strain DSM 2380 / NBRC 103641 / GraBd1) (Pelobacter carbinolicus)).